Consider the following 376-residue polypeptide: Cellular tumor antigen p53 (376 aa).

Positions methionine 1–tryptophan 36 are transcription activation (acidic). A DNA-binding region spans residues aspartate 77–glutamine 268. A compositionally biased stretch (basic and acidic residues) spans arginine 150–aspartate 159. A disordered region spans residues arginine 150–leucine 171. Residues cysteine 151, histidine 154, cysteine 214, and cysteine 218 each contribute to the Zn(2+) site. An interaction with DNA region spans residues arginine 249–arginine 256. Basic and acidic residues-rich tracts occupy residues aspartate 257–glutamate 270 and serine 282–lysine 294. Positions aspartate 257–tyrosine 306 are disordered. The Bipartite nuclear localization signal signature appears at lysine 280–lysine 297. Positions aspartate 303 to proline 334 are oligomerization. The Nuclear export signal motif lies at glutamate 317–leucine 328. Residues glutamine 342–aspartate 376 form a disordered region. The basic (repression of DNA-binding) stretch occupies residues lysine 347–lysine 372. Over residues cysteine 349 to lysine 361 the composition is skewed to basic and acidic residues.

This sequence belongs to the p53 family. As to quaternary structure, binds DNA as a homotetramer. It depends on Zn(2+) as a cofactor.

It localises to the cytoplasm. The protein localises to the nucleus. In terms of biological role, multifunctional transcription factor that induces cell cycle arrest, DNA repair or apoptosis upon binding to its target DNA sequence. Acts as a tumor suppressor in many tumor types; induces growth arrest or apoptosis depending on the physiological circumstances and cell type. Negatively regulates cell division by controlling expression of a set of genes required for this process. One of the activated genes is an inhibitor of cyclin-dependent kinases. Apoptosis induction seems to be mediated either by stimulation of BAX and FAS antigen expression, or by repression of Bcl-2 expression. This chain is Cellular tumor antigen p53 (tp53), found in Ictalurus punctatus (Channel catfish).